The following is a 766-amino-acid chain: Phosphoribosylformylglycinamidine synthase subunit PurL (766 aa).

His66 is an active-site residue. The ATP site is built by Tyr69 and Lys113. Residue Glu115 participates in Mg(2+) binding. Substrate contacts are provided by residues 116-119 and Arg138; that span reads SHNH. His117 functions as the Proton acceptor in the catalytic mechanism. Asp139 is a Mg(2+) binding site. Gln264 is a binding site for substrate. Mg(2+) is bound at residue Asp292. 336–338 provides a ligand contact to substrate; the sequence is ESQ. ATP-binding residues include Asn524 and Gly561. Asn562 lines the Mg(2+) pocket. Residue Ser564 participates in substrate binding.

It belongs to the FGAMS family. As to quaternary structure, monomer. Part of the FGAM synthase complex composed of 1 PurL, 1 PurQ and 2 PurS subunits.

It localises to the cytoplasm. It carries out the reaction N(2)-formyl-N(1)-(5-phospho-beta-D-ribosyl)glycinamide + L-glutamine + ATP + H2O = 2-formamido-N(1)-(5-O-phospho-beta-D-ribosyl)acetamidine + L-glutamate + ADP + phosphate + H(+). Its pathway is purine metabolism; IMP biosynthesis via de novo pathway; 5-amino-1-(5-phospho-D-ribosyl)imidazole from N(2)-formyl-N(1)-(5-phospho-D-ribosyl)glycinamide: step 1/2. Part of the phosphoribosylformylglycinamidine synthase complex involved in the purines biosynthetic pathway. Catalyzes the ATP-dependent conversion of formylglycinamide ribonucleotide (FGAR) and glutamine to yield formylglycinamidine ribonucleotide (FGAM) and glutamate. The FGAM synthase complex is composed of three subunits. PurQ produces an ammonia molecule by converting glutamine to glutamate. PurL transfers the ammonia molecule to FGAR to form FGAM in an ATP-dependent manner. PurS interacts with PurQ and PurL and is thought to assist in the transfer of the ammonia molecule from PurQ to PurL. This chain is Phosphoribosylformylglycinamidine synthase subunit PurL, found in Mycobacterium bovis (strain BCG / Pasteur 1173P2).